Consider the following 196-residue polypeptide: Holliday junction branch migration complex subunit RuvA (196 aa).

Positions 1–63 are domain I; it reads MYEYFKGIIS…EDAELLYGFA (63 aa). The interval 64 to 142 is domain II; that stretch reads TEEEKQLFLS…AAGSPAESKA (79 aa). The tract at residues 143–146 is flexible linker; that stretch reads PVQT. Residues 147 to 196 form a domain III region; it reads ADNQELEEAMEAMLALGYKAAELKKIKKFFEGTTDTAENYIKSALKMLVK.

It belongs to the RuvA family. Homotetramer. Forms an RuvA(8)-RuvB(12)-Holliday junction (HJ) complex. HJ DNA is sandwiched between 2 RuvA tetramers; dsDNA enters through RuvA and exits via RuvB. An RuvB hexamer assembles on each DNA strand where it exits the tetramer. Each RuvB hexamer is contacted by two RuvA subunits (via domain III) on 2 adjacent RuvB subunits; this complex drives branch migration. In the full resolvosome a probable DNA-RuvA(4)-RuvB(12)-RuvC(2) complex forms which resolves the HJ.

It localises to the cytoplasm. In terms of biological role, the RuvA-RuvB-RuvC complex processes Holliday junction (HJ) DNA during genetic recombination and DNA repair, while the RuvA-RuvB complex plays an important role in the rescue of blocked DNA replication forks via replication fork reversal (RFR). RuvA specifically binds to HJ cruciform DNA, conferring on it an open structure. The RuvB hexamer acts as an ATP-dependent pump, pulling dsDNA into and through the RuvAB complex. HJ branch migration allows RuvC to scan DNA until it finds its consensus sequence, where it cleaves and resolves the cruciform DNA. The chain is Holliday junction branch migration complex subunit RuvA from Streptococcus sanguinis (strain SK36).